A 921-amino-acid chain; its full sequence is Protein translocase subunit SecA (921 aa).

Residues Gln85, 103–107, and Asp514 contribute to the ATP site; that span reads GEGKT. Residues Cys905, Cys907, Cys916, and His917 each contribute to the Zn(2+) site.

It belongs to the SecA family. As to quaternary structure, monomer and homodimer. Part of the essential Sec protein translocation apparatus which comprises SecA, SecYEG and auxiliary proteins SecDF-YajC and YidC. Requires Zn(2+) as cofactor.

It localises to the cell inner membrane. The protein localises to the cytoplasm. It carries out the reaction ATP + H2O + cellular proteinSide 1 = ADP + phosphate + cellular proteinSide 2.. Functionally, part of the Sec protein translocase complex. Interacts with the SecYEG preprotein conducting channel. Has a central role in coupling the hydrolysis of ATP to the transfer of proteins into and across the cell membrane, serving both as a receptor for the preprotein-SecB complex and as an ATP-driven molecular motor driving the stepwise translocation of polypeptide chains across the membrane. This Herminiimonas arsenicoxydans protein is Protein translocase subunit SecA.